The primary structure comprises 205 residues: tRNA (pseudouridine(54)-N(1))-methyltransferase (205 aa).

S-adenosyl-L-methionine-binding positions include leucine 136, glycine 156, leucine 179–leucine 184, and cysteine 189.

It belongs to the methyltransferase superfamily. TrmY family. In terms of assembly, homodimer.

It is found in the cytoplasm. The catalysed reaction is pseudouridine(54) in tRNA + S-adenosyl-L-methionine = N(1)-methylpseudouridine(54) in tRNA + S-adenosyl-L-homocysteine + H(+). Its function is as follows. Specifically catalyzes the N1-methylation of pseudouridine at position 54 (Psi54) in tRNAs. The protein is tRNA (pseudouridine(54)-N(1))-methyltransferase of Methanocaldococcus jannaschii (strain ATCC 43067 / DSM 2661 / JAL-1 / JCM 10045 / NBRC 100440) (Methanococcus jannaschii).